Here is a 65-residue protein sequence, read N- to C-terminus: Alpha-insect toxin BotIT1 (65 aa).

The region spanning 2–64 is the LCN-type CS-alpha/beta domain; the sequence is RDAYIAQNYN…VPIRIPGKCH (63 aa). Intrachain disulfides connect Cys-12–Cys-63, Cys-16–Cys-36, Cys-22–Cys-46, and Cys-26–Cys-48.

This sequence belongs to the long (4 C-C) scorpion toxin superfamily. Sodium channel inhibitor family. Alpha subfamily. Expressed by the venom gland.

It localises to the secreted. In terms of biological role, alpha toxins bind voltage-independently at site-3 of sodium channels (Nav) and inhibit the inactivation of the activated channels, thereby blocking neuronal transmission. This contractive toxin is highly toxic to insects and barely toxic to mammals. In Buthus occitanus tunetanus (Common European scorpion), this protein is Alpha-insect toxin BotIT1.